The following is a 1225-amino-acid chain: RNA-directed RNA polymerase VP2 (1225 aa).

Positions 497–727 (LFLSFMPYTI…NSIVLLQQLV (231 aa)) constitute a RdRp catalytic domain.

This sequence belongs to the reoviridae RNA-directed RNA polymerase family. Interacts with VP6.

The catalysed reaction is RNA(n) + a ribonucleoside 5'-triphosphate = RNA(n+1) + diphosphate. Its function is as follows. RNA-directed RNA polymerase that is involved in transcription and genome replication. Following infection, it catalyzes the synthesis of fully conservative plus strands. After core assembly, which consists in recruitment of one capped plus-strand for each genomic segments and polymerase complexes, the polymerase switches mode and catalyzes the synthesis of complementary minus-strands. This is RNA-directed RNA polymerase VP2 (S2) from Lymantria dispar (Gypsy moth).